Reading from the N-terminus, the 138-residue chain is Large ribosomal subunit protein uL16 (138 aa).

The span at methionine 1–glutamine 13 shows a compositional bias: basic residues. The tract at residues methionine 1 to leucine 20 is disordered.

The protein belongs to the universal ribosomal protein uL16 family. Part of the 50S ribosomal subunit.

Its function is as follows. Binds 23S rRNA and is also seen to make contacts with the A and possibly P site tRNAs. This is Large ribosomal subunit protein uL16 from Bordetella avium (strain 197N).